A 145-amino-acid polypeptide reads, in one-letter code: Superoxide dismutase [Cu-Zn] (145 aa).

Histidine 37, histidine 39, and histidine 54 together coordinate Cu cation. Residues cysteine 48 and cysteine 137 are joined by a disulfide bond. Histidine 54, histidine 62, histidine 71, and aspartate 74 together coordinate Zn(2+). Residue histidine 111 participates in Cu cation binding.

The protein belongs to the Cu-Zn superoxide dismutase family. In terms of assembly, homodimer. Requires Cu cation as cofactor. Zn(2+) is required as a cofactor.

It is found in the cytoplasm. It catalyses the reaction 2 superoxide + 2 H(+) = H2O2 + O2. Destroys radicals which are normally produced within the cells and which are toxic to biological systems. The sequence is that of Superoxide dismutase [Cu-Zn] from Drosophila busckii (Fruit fly).